The primary structure comprises 360 residues: Phospho-N-acetylmuramoyl-pentapeptide-transferase (360 aa).

The next 10 membrane-spanning stretches (helical) occupy residues Arg25–Ile45, Thr73–Leu93, Tyr97–Tyr117, Tyr134–Thr154, Val168–Ser188, Gly199–Ser219, Ser236–Phe256, Val263–Ile283, Ile288–Val308, and Val338–Lys358.

Belongs to the glycosyltransferase 4 family. MraY subfamily. The cofactor is Mg(2+).

Its subcellular location is the cell inner membrane. It carries out the reaction UDP-N-acetyl-alpha-D-muramoyl-L-alanyl-gamma-D-glutamyl-meso-2,6-diaminopimeloyl-D-alanyl-D-alanine + di-trans,octa-cis-undecaprenyl phosphate = di-trans,octa-cis-undecaprenyl diphospho-N-acetyl-alpha-D-muramoyl-L-alanyl-D-glutamyl-meso-2,6-diaminopimeloyl-D-alanyl-D-alanine + UMP. The protein operates within cell wall biogenesis; peptidoglycan biosynthesis. Catalyzes the initial step of the lipid cycle reactions in the biosynthesis of the cell wall peptidoglycan: transfers peptidoglycan precursor phospho-MurNAc-pentapeptide from UDP-MurNAc-pentapeptide onto the lipid carrier undecaprenyl phosphate, yielding undecaprenyl-pyrophosphoryl-MurNAc-pentapeptide, known as lipid I. In Pseudomonas putida (strain ATCC 700007 / DSM 6899 / JCM 31910 / BCRC 17059 / LMG 24140 / F1), this protein is Phospho-N-acetylmuramoyl-pentapeptide-transferase.